Here is a 206-residue protein sequence, read N- to C-terminus: Large ribosomal subunit protein uL4 (206 aa).

This sequence belongs to the universal ribosomal protein uL4 family. As to quaternary structure, part of the 50S ribosomal subunit.

Its function is as follows. One of the primary rRNA binding proteins, this protein initially binds near the 5'-end of the 23S rRNA. It is important during the early stages of 50S assembly. It makes multiple contacts with different domains of the 23S rRNA in the assembled 50S subunit and ribosome. Functionally, forms part of the polypeptide exit tunnel. The chain is Large ribosomal subunit protein uL4 from Rhodopseudomonas palustris (strain BisB18).